Consider the following 261-residue polypeptide: Thiazole synthase (261 aa).

K102 (schiff-base intermediate with DXP) is an active-site residue. 1-deoxy-D-xylulose 5-phosphate-binding positions include G163, A189–G190, and N211–T212.

This sequence belongs to the ThiG family. As to quaternary structure, homotetramer. Forms heterodimers with either ThiH or ThiS.

It is found in the cytoplasm. The catalysed reaction is [ThiS sulfur-carrier protein]-C-terminal-Gly-aminoethanethioate + 2-iminoacetate + 1-deoxy-D-xylulose 5-phosphate = [ThiS sulfur-carrier protein]-C-terminal Gly-Gly + 2-[(2R,5Z)-2-carboxy-4-methylthiazol-5(2H)-ylidene]ethyl phosphate + 2 H2O + H(+). Its pathway is cofactor biosynthesis; thiamine diphosphate biosynthesis. In terms of biological role, catalyzes the rearrangement of 1-deoxy-D-xylulose 5-phosphate (DXP) to produce the thiazole phosphate moiety of thiamine. Sulfur is provided by the thiocarboxylate moiety of the carrier protein ThiS. In vitro, sulfur can be provided by H(2)S. In Acinetobacter baumannii (strain SDF), this protein is Thiazole synthase.